The sequence spans 410 residues: Argininosuccinate synthase (410 aa).

Residues 10–18 (AYSGGLDTS) and A37 contribute to the ATP site. Residues Y90 and S95 each coordinate L-citrulline. G120 serves as a coordination point for ATP. T122, N126, and D127 together coordinate L-aspartate. N126 contacts L-citrulline. L-citrulline contacts are provided by R130, S182, S191, E267, and Y279.

It belongs to the argininosuccinate synthase family. Type 1 subfamily. Homotetramer.

It localises to the cytoplasm. The catalysed reaction is L-citrulline + L-aspartate + ATP = 2-(N(omega)-L-arginino)succinate + AMP + diphosphate + H(+). Its pathway is amino-acid biosynthesis; L-arginine biosynthesis; L-arginine from L-ornithine and carbamoyl phosphate: step 2/3. This Polynucleobacter asymbioticus (strain DSM 18221 / CIP 109841 / QLW-P1DMWA-1) (Polynucleobacter necessarius subsp. asymbioticus) protein is Argininosuccinate synthase.